A 320-amino-acid chain; its full sequence is R2-like ligand binding oxidase (320 aa).

Positions 68, 101, and 104 each coordinate Mn(2+). The 3-(O4'-tyrosyl)-valine (Val-Tyr) cross-link spans 71-162; sequence VTKDIQPFMS…AAQVRASVVY (92 aa). Glu-101 provides a ligand contact to Fe cation. Residues Glu-167, Glu-202, and His-205 each contribute to the Fe cation site.

It belongs to the ribonucleoside diphosphate reductase small chain family. R2-like ligand binding oxidase subfamily. In terms of assembly, homodimer. Fe cation is required as a cofactor. It depends on Mn(2+) as a cofactor.

Functionally, probable oxidase that might be involved in lipid metabolism. This is R2-like ligand binding oxidase (nrdB) from Mycolicibacterium smegmatis (strain ATCC 700084 / mc(2)155) (Mycobacterium smegmatis).